Here is a 179-residue protein sequence, read N- to C-terminus: ATP synthase subunit delta (179 aa).

Belongs to the ATPase delta chain family. As to quaternary structure, F-type ATPases have 2 components, F(1) - the catalytic core - and F(0) - the membrane proton channel. F(1) has five subunits: alpha(3), beta(3), gamma(1), delta(1), epsilon(1). F(0) has three main subunits: a(1), b(2) and c(10-14). The alpha and beta chains form an alternating ring which encloses part of the gamma chain. F(1) is attached to F(0) by a central stalk formed by the gamma and epsilon chains, while a peripheral stalk is formed by the delta and b chains.

It is found in the cell inner membrane. Its function is as follows. F(1)F(0) ATP synthase produces ATP from ADP in the presence of a proton or sodium gradient. F-type ATPases consist of two structural domains, F(1) containing the extramembraneous catalytic core and F(0) containing the membrane proton channel, linked together by a central stalk and a peripheral stalk. During catalysis, ATP synthesis in the catalytic domain of F(1) is coupled via a rotary mechanism of the central stalk subunits to proton translocation. In terms of biological role, this protein is part of the stalk that links CF(0) to CF(1). It either transmits conformational changes from CF(0) to CF(1) or is implicated in proton conduction. This chain is ATP synthase subunit delta, found in Burkholderia ambifaria (strain ATCC BAA-244 / DSM 16087 / CCUG 44356 / LMG 19182 / AMMD) (Burkholderia cepacia (strain AMMD)).